The chain runs to 136 residues: Large ribosomal subunit protein uL16 (136 aa).

The protein belongs to the universal ribosomal protein uL16 family. Part of the 50S ribosomal subunit.

Its function is as follows. Binds 23S rRNA and is also seen to make contacts with the A and possibly P site tRNAs. The protein is Large ribosomal subunit protein uL16 of Haemophilus influenzae (strain 86-028NP).